Consider the following 259-residue polypeptide: Insulin-like growth factor-binding protein 1 (259 aa).

An N-terminal signal peptide occupies residues 1 to 25 (MSEVPVARVWLVLLLLTVQVGVTAG). One can recognise an IGFBP N-terminal domain in the interval 26–107 (APWQCAPCSA…TRGQGACVQE (82 aa)). 6 disulfides stabilise this stretch: cysteine 30/cysteine 57, cysteine 33/cysteine 59, cysteine 41/cysteine 60, cysteine 48/cysteine 63, cysteine 71/cysteine 84, and cysteine 78/cysteine 104. At serine 45 the chain carries Phosphoserine; by FAM20C. Residues serine 120, serine 123, serine 126, and serine 144 each carry the phosphoserine modification. Serine 156 is modified (phosphoserine; by FAM20C). Threonine 157 is subject to Phosphothreonine; by FAM20C. Residue tyrosine 158 is modified to Phosphotyrosine. Residues 173–251 (KEPCRIELYR…SPEIRGDPNC (79 aa)) enclose the Thyroglobulin type-1 domain. Disulfide bonds link cysteine 176-cysteine 206, cysteine 217-cysteine 228, and cysteine 230-cysteine 251. Residue threonine 193 is modified to Phosphothreonine; by FAM20C. Serine 194 and serine 199 each carry phosphoserine; by FAM20C. Residue serine 242 is modified to Phosphoserine; by FAM20C. Residues 246 to 248 (RGD) carry the Cell attachment site motif.

As to quaternary structure, binds equally well IGF1 and IGF2. Interacts with integrin ITGA5:ITGB1. Interacts with VHL; this interaction inhibits HIF1A degradation. Post-translationally, phosphorylated; probably by casein kinase II. Phosphorylation alters the affinity of the protein for IGFs. In amniotic fluid, the unmodified protein is the most abundant form, while mono-, bi-, tri- and tetraphosphorylated forms are present in decreasing amounts. The phosphorylation state may influence the propensity to proteolysis.

The protein resides in the secreted. Multifunctional protein that plays a critical role in regulating the availability of IGFs such as IGF1 and IGF2 to their receptors and thereby regulates IGF-mediated cellular processes including cell migration, proliferation, differentiation or apoptosis in a cell-type specific manner. Also plays a positive role in cell migration by interacting with integrin ITGA5:ITGB1 through its RGD motif. Mechanistically, binding to integrins leads to activation of focal adhesion kinase/PTK2 and stimulation of the mitogen-activated protein kinase (MAPK) pathway. Regulates cardiomyocyte apoptosis by suppressing HIF-1alpha/HIF1A ubiquitination and subsequent degradation. The protein is Insulin-like growth factor-binding protein 1 (IGFBP1) of Homo sapiens (Human).